The following is a 36-amino-acid chain: Conotoxin Cl14.10 (36 aa).

The propeptide occupies 1 to 2 (NE).

In terms of processing, contains 2 disulfide bond. In terms of tissue distribution, expressed by the venom duct.

The protein localises to the secreted. The sequence is that of Conotoxin Cl14.10 from Californiconus californicus (California cone).